A 192-amino-acid polypeptide reads, in one-letter code: Na(+)-translocating ferredoxin:NAD(+) oxidoreductase complex subunit A (192 aa).

The next 6 membrane-spanning stretches (helical) occupy residues 4–24 (IFIM…FLGI), 38–58 (VGMG…TYVV), 71–91 (LQTI…EMII), 101–121 (ALGV…VALI), 133–153 (IFNG…FAGI), and 169–189 (FPIA…FSGM).

It belongs to the NqrDE/RnfAE family. In terms of assembly, the complex is composed of six subunits: RnfA, RnfB, RnfC, RnfD, RnfE and RnfG.

The protein localises to the cell membrane. The enzyme catalyses 2 reduced [2Fe-2S]-[ferredoxin] + Na(+)(in) + NAD(+) + H(+) = 2 oxidized [2Fe-2S]-[ferredoxin] + Na(+)(out) + NADH. Its function is as follows. Part of a membrane-bound complex that couples electron transfer with translocation of ions across the membrane. Couples electron transfer from reduced ferredoxin to NAD(+) with electrogenic movement of Na(+) out of the cell. Involved in caffeate respiration. The polypeptide is Na(+)-translocating ferredoxin:NAD(+) oxidoreductase complex subunit A (Acetobacterium woodii (strain ATCC 29683 / DSM 1030 / JCM 2381 / KCTC 1655 / WB1)).